A 452-amino-acid polypeptide reads, in one-letter code: MRSLTLLLSLSTALRSVAAPHPASPQGQIPLGGIPSASTSEVGIGIGIGIEEDPFPPAAGSGHNDLEDVINASPLLSFHRDLVSIESISGHEARAAAFVADFLEAHNFTVVKQPVAGDRVNIFASPRAHAHSRPEILLTSHLDTVPPFIPYSLHRNDSRPTDRQLIRIAGRGAVDAKASVAAQIFAALDILHADPSAPLGLLFVVGEEVGGDGMKAFSHDPRLNPAPSRFHTVIFGEPTDFALVAGHKGMLGFEVLASGRPAHSGYPWLGRSAVSAILPALRRVDALGHIPVHHGGLPASHKYGRTTLNIGVLEGGVATNVVPAAARADVAVRLAAGSVDDARAIIAAAVADATHRDPAVVVDFSRHLEAYPPQDLDVDVPGFEITTVNYGTDVPNLHLHPRPDGPVKRYLYGPGSIFVAHGENEGLTVGALEEAVGGYKKLVQAALERTRA.

The N-terminal stretch at Met1–Ala18 is a signal peptide. N-linked (GlcNAc...) asparagine glycans are attached at residues Asn107 and Asn156. Asp175 contacts Zn(2+). The active-site Proton acceptor is the Glu207. Glu208 serves as a coordination point for Zn(2+).

Belongs to the peptidase M20A family. Zn(2+) serves as cofactor.

It localises to the secreted. The sequence is that of Probable carboxypeptidase ACLA_088580 from Aspergillus clavatus (strain ATCC 1007 / CBS 513.65 / DSM 816 / NCTC 3887 / NRRL 1 / QM 1276 / 107).